Here is a 174-residue protein sequence, read N- to C-terminus: MPGQTQGAKRWRVPGRGWRWAGILLLVWLGLASPAAGRIDPYVSHYLRTTEPIELPWDAEGHMLTFTPEQLTDGKNRFQSACLNCHVGGSTLPAPNISLSLKDLRGATPPRDTIQALVEYQRDPRSYDGTEVSYGCRPVPPSWMDDEALRNLAAFILRAAQVAPGWGSNAIGGG.

The first 37 residues, 1–37, serve as a signal peptide directing secretion; that stretch reads MPGQTQGAKRWRVPGRGWRWAGILLLVWLGLASPAAG. Residues cysteine 82, cysteine 85, histidine 86, and cysteine 136 each contribute to the heme c site.

The protein belongs to the cytochrome c family. PsbV subfamily. Requires heme c as cofactor.

It is found in the cellular thylakoid membrane. Functionally, possible low-potential cytochrome c. The chain is Cytochrome c-550-like protein (psbV2) from Synechococcus sp. (strain JA-3-3Ab) (Cyanobacteria bacterium Yellowstone A-Prime).